We begin with the raw amino-acid sequence, 1056 residues long: MKIDVSKVIVIGSGAIKIGEAAEFDYSGSQALKALREEGIESVLVNPNVATIQTSYELADKVYLLPLKTEFIEKVIEKEKPDGILVGFGGQTALSLGVSLYKKGILDKYNVKVLGTPIEGIERALDREKFQKTMKKVGLPVPPSDAAKTPEEAIEIAESIGFPVIVRVSFNLGGRGSFIARSREEFEKYIIRAFAQSEIRKVLVEKYLNGWKEIEFEVVRDKAGNSVAVVCLENVDPMGVHTGESIVVGPSQTLTNREYQMLRDAAIRVADAIELIGEGNVQLALSPNSEEYYVIETNPRMSRSSALASKVTGYPLAYIATKLAIGYTLDELRNTVTGITTAAFEPSLDYVAVKIPRWDFKKFEEVNKSIGSEMKSIGEVMAIGRNLHEAFQKAIRMLDIGDELIGKYYLEDEPLENVLERLKKKEPYLLMHIAKALRLGATVEDIHKITKVDKFFIYVIEDLVKIAEELRKNPTEELIREAKRLGFSDWEIELLTKRKVKKKWKPVVKNIDTLAGEFPAKTNYLYVTYDGVENDIPKPKKPSILVLGAGVFRIGVSVEFDWAVVNFVNAIRKRGIEAAILNYNPETVSTDWDMSDRLYFEEITLERVLDIYEFERPIGVVAFAGGQLANSLAKKLENAGVKLLGTSGKSVDKAENRAKFSKLLEKLGIPQPEWISAESIDEAIKLAKKIEYPVIVRPSYVLSGTAMKVAWNEKELIDFLKEAASVSPEHPVLISKFIPGTEAEIDAVSDGKKVVGVTLEHIEGAGVHSGDSTMVTPWRTLSERNVKRIWEITYELAKELEIKGPFNVQFVIDKKPYVLELNLRTSRSMPFSSKSRGVNLMELSAQAVLDGELKIGVEGKYYEIPPVAYGVKSPQFSWAQLQGAYPFLGPEMRSTGEVAALGTHYEDALLKSWLSVKPNELPKTSALIYGWEKKNILKETAKILENLGITTYSIGGDIGEINISKQEAVNMIKEGKIDIIMTTGYAKDKDYEIRRLAADLNVPLVLDANLALELAKAIEWKTKTQEEFEIKELREYWIRKIEENVEEYAASVVLRR.

The segment at 1–399 (MKIDVSKVIV…AFQKAIRMLD (399 aa)) is carboxyphosphate synthetic domain. Positions 127, 167, 173, 174, 206, 208, 213, 239, 240, 241, 282, and 296 each coordinate ATP. Residues 131 to 325 (QKTMKKVGLP…LAYIATKLAI (195 aa)) enclose the ATP-grasp 1 domain. Q282, E296, and N298 together coordinate Mg(2+). Positions 282, 296, and 298 each coordinate Mn(2+). Residues 400 to 536 (IGDELIGKYY…VTYDGVENDI (137 aa)) are oligomerization domain. Residues 537-919 (PKPKKPSILV…LKSWLSVKPN (383 aa)) form a carbamoyl phosphate synthetic domain region. Residues 661 to 849 (SKLLEKLGIP…LMELSAQAVL (189 aa)) form the ATP-grasp 2 domain. Positions 697, 736, 738, 742, 766, 767, 768, 769, 809, and 820 each coordinate ATP. Mg(2+)-binding residues include Q809, E820, and N822. 3 residues coordinate Mn(2+): Q809, E820, and N822. In terms of domain architecture, MGS-like spans 915–1043 (SVKPNELPKT…REYWIRKIEE (129 aa)). The tract at residues 920–1056 (ELPKTSALIY…EYAASVVLRR (137 aa)) is allosteric domain.

This sequence belongs to the CarB family. Composed of two chains; the small (or glutamine) chain promotes the hydrolysis of glutamine to ammonia, which is used by the large (or ammonia) chain to synthesize carbamoyl phosphate. Tetramer of heterodimers (alpha,beta)4. The cofactor is Mg(2+). Mn(2+) serves as cofactor.

The enzyme catalyses hydrogencarbonate + L-glutamine + 2 ATP + H2O = carbamoyl phosphate + L-glutamate + 2 ADP + phosphate + 2 H(+). It catalyses the reaction hydrogencarbonate + NH4(+) + 2 ATP = carbamoyl phosphate + 2 ADP + phosphate + 2 H(+). The protein operates within amino-acid biosynthesis; L-arginine biosynthesis; carbamoyl phosphate from bicarbonate: step 1/1. It participates in pyrimidine metabolism; UMP biosynthesis via de novo pathway; (S)-dihydroorotate from bicarbonate: step 1/3. Functionally, large subunit of the glutamine-dependent carbamoyl phosphate synthetase (CPSase). CPSase catalyzes the formation of carbamoyl phosphate from the ammonia moiety of glutamine, carbonate, and phosphate donated by ATP, constituting the first step of 2 biosynthetic pathways, one leading to arginine and/or urea and the other to pyrimidine nucleotides. The large subunit (synthetase) binds the substrates ammonia (free or transferred from glutamine from the small subunit), hydrogencarbonate and ATP and carries out an ATP-coupled ligase reaction, activating hydrogencarbonate by forming carboxy phosphate which reacts with ammonia to form carbamoyl phosphate. In Pyrococcus furiosus (strain ATCC 43587 / DSM 3638 / JCM 8422 / Vc1), this protein is Carbamoyl phosphate synthase large chain.